Reading from the N-terminus, the 525-residue chain is GMP synthase [glutamine-hydrolyzing] (525 aa).

Residues 16–205 (PVLVVDFGAQ…LHDFAGLGAQ (190 aa)) enclose the Glutamine amidotransferase type-1 domain. The Nucleophile role is filled by cysteine 93. Catalysis depends on residues histidine 179 and glutamate 181. The GMPS ATP-PPase domain maps to 206–399 (WTPANIANAL…LGLPEEIVAR (194 aa)). An ATP-binding site is contributed by 233 to 239 (SGGVDSA).

As to quaternary structure, homodimer.

It carries out the reaction XMP + L-glutamine + ATP + H2O = GMP + L-glutamate + AMP + diphosphate + 2 H(+). Its pathway is purine metabolism; GMP biosynthesis; GMP from XMP (L-Gln route): step 1/1. Catalyzes the synthesis of GMP from XMP. This chain is GMP synthase [glutamine-hydrolyzing] (guaA), found in Mycobacterium tuberculosis (strain CDC 1551 / Oshkosh).